Reading from the N-terminus, the 213-residue chain is Na(+)-translocating NADH-quinone reductase subunit D (213 aa).

The next 7 membrane-spanning stretches (helical) occupy residues 14 to 34, 42 to 62, 77 to 97, 101 to 121, 131 to 151, 154 to 174, and 183 to 203; these read ALWI…ALAV, LTMG…VSLL, IIIS…FFNI, LSVF…AESM, FLDG…ISII, LFGF…YASA, and LGLM…VWLV.

Belongs to the NqrDE/RnfAE family. As to quaternary structure, composed of six subunits; NqrA, NqrB, NqrC, NqrD, NqrE and NqrF.

It is found in the cell inner membrane. It carries out the reaction a ubiquinone + n Na(+)(in) + NADH + H(+) = a ubiquinol + n Na(+)(out) + NAD(+). NQR complex catalyzes the reduction of ubiquinone-1 to ubiquinol by two successive reactions, coupled with the transport of Na(+) ions from the cytoplasm to the periplasm. NqrA to NqrE are probably involved in the second step, the conversion of ubisemiquinone to ubiquinol. This chain is Na(+)-translocating NADH-quinone reductase subunit D, found in Chlamydia muridarum (strain MoPn / Nigg).